Reading from the N-terminus, the 512-residue chain is 2,3-bisphosphoglycerate-independent phosphoglycerate mutase (512 aa).

Mn(2+) is bound by residues aspartate 12 and serine 62. The active-site Phosphoserine intermediate is serine 62. Residues histidine 123, 153–154, arginine 185, arginine 191, 260–263, and lysine 333 each bind substrate; these read RD and RPDR. Mn(2+) contacts are provided by aspartate 400, histidine 404, aspartate 441, histidine 442, and histidine 460.

It belongs to the BPG-independent phosphoglycerate mutase family. Monomer. It depends on Mn(2+) as a cofactor.

The catalysed reaction is (2R)-2-phosphoglycerate = (2R)-3-phosphoglycerate. The protein operates within carbohydrate degradation; glycolysis; pyruvate from D-glyceraldehyde 3-phosphate: step 3/5. In terms of biological role, catalyzes the interconversion of 2-phosphoglycerate and 3-phosphoglycerate. The chain is 2,3-bisphosphoglycerate-independent phosphoglycerate mutase from Clostridium perfringens (strain ATCC 13124 / DSM 756 / JCM 1290 / NCIMB 6125 / NCTC 8237 / Type A).